We begin with the raw amino-acid sequence, 518 residues long: Protein translocase subunit SecD (518 aa).

The next 6 membrane-spanning stretches (helical) occupy residues 9-29 (IFLS…NFMQ), 361-381 (LIGF…LGLF), 384-404 (IALS…QATL), 406-426 (LPGI…NVLI), 452-474 (FATI…IFGV), and 486-506 (IGII…IDIW).

The protein belongs to the SecD/SecF family. SecD subfamily. As to quaternary structure, forms a complex with SecF. Part of the essential Sec protein translocation apparatus which comprises SecA, SecYEG and auxiliary proteins SecDF-YajC and YidC.

It is found in the cell inner membrane. Part of the Sec protein translocase complex. Interacts with the SecYEG preprotein conducting channel. SecDF uses the proton motive force (PMF) to complete protein translocation after the ATP-dependent function of SecA. The polypeptide is Protein translocase subunit SecD (Rickettsia conorii (strain ATCC VR-613 / Malish 7)).